A 267-amino-acid polypeptide reads, in one-letter code: Regulatory protein RecX (267 aa).

It belongs to the RecX family.

The protein localises to the cytoplasm. Modulates RecA activity. This is Regulatory protein RecX from Staphylococcus epidermidis (strain ATCC 12228 / FDA PCI 1200).